Here is a 59-residue protein sequence, read N- to C-terminus: Preprotein translocase subunit SecG (59 aa).

The Cytoplasmic segment spans residues 1 to 35; sequence MPSSKKKKEDVPIASMAGLVRYYESEKEKVKISPK. A helical transmembrane segment spans residues 36-56; the sequence is VVVVASIVLIAGVIIASFIIP. Topologically, residues 57-59 are extracellular; it reads PPL.

This sequence belongs to the SEC61-beta family. Component of the protein translocase complex. Heterotrimer consisting of alpha (SecY), beta (SecG) and gamma (SecE) subunits. Can form oligomers of the heterotrimer.

It is found in the cell membrane. In terms of biological role, involved in protein export. The function of the beta subunit is unknown, but it may be involved in stabilization of the trimeric complex. The protein is Preprotein translocase subunit SecG of Sulfolobus acidocaldarius (strain ATCC 33909 / DSM 639 / JCM 8929 / NBRC 15157 / NCIMB 11770).